Consider the following 270-residue polypeptide: Putative pyruvate, phosphate dikinase regulatory protein (270 aa).

150–157 contributes to the ADP binding site; that stretch reads GPSRTSKS.

Belongs to the pyruvate, phosphate/water dikinase regulatory protein family. PDRP subfamily.

The catalysed reaction is N(tele)-phospho-L-histidyl/L-threonyl-[pyruvate, phosphate dikinase] + ADP = N(tele)-phospho-L-histidyl/O-phospho-L-threonyl-[pyruvate, phosphate dikinase] + AMP + H(+). It catalyses the reaction N(tele)-phospho-L-histidyl/O-phospho-L-threonyl-[pyruvate, phosphate dikinase] + phosphate + H(+) = N(tele)-phospho-L-histidyl/L-threonyl-[pyruvate, phosphate dikinase] + diphosphate. In terms of biological role, bifunctional serine/threonine kinase and phosphorylase involved in the regulation of the pyruvate, phosphate dikinase (PPDK) by catalyzing its phosphorylation/dephosphorylation. The protein is Putative pyruvate, phosphate dikinase regulatory protein of Neorickettsia sennetsu (strain ATCC VR-367 / Miyayama) (Ehrlichia sennetsu).